The primary structure comprises 362 residues: Very-long-chain (3R)-3-hydroxyacyl-CoA dehydratase (362 aa).

Residues 1 to 149 are Cytoplasmic-facing; that stretch reads MADCSLRPHV…DPFKHLKKGY (149 aa). Residues 5 to 94 enclose the CS domain; that stretch reads SLRPHVHWAQ…KESSWWERLT (90 aa). Positions 111–135 form a coiled coil; the sequence is LDESDAEMELKEKEEEKINKMKIES. Residues 150-170 traverse the membrane as a helical segment; the sequence is LIMYNLVQFLGFSWIFVNMTV. Topologically, residues 171–189 are lumenal; sequence RLFILGKDSFYDTFHTIAD. A helical membrane pass occupies residues 190–210; it reads MMYFCQTLALMEILNSLIGLV. Topologically, residues 211–212 are cytoplasmic; that stretch reads RS. A helical transmembrane segment spans residues 213-233; it reads PLIPAVIQVFGRNFILFVVLG. The Lumenal segment spans residues 234-242; the sequence is SLEEMQSKA. The helical transmembrane segment at 243–263 threads the bilayer; sequence VVFFLFYFWSIIELFRYPYYM. Over 264 to 282 the chain is Cytoplasmic; sequence LSCMGIEWKPLTWLRYTSW. The chain crosses the membrane as a helical span at residues 283–303; the sequence is IPLYPLGGLAEAVCLIQSIPI. Catalysis depends on residues tyrosine 286 and glutamate 293. Topologically, residues 304–319 are lumenal; sequence FSETGKFSLGLPNPLN. The chain crosses the membrane as a helical span at residues 320 to 340; sequence VTIQFSFLLQMYLIALFLGLF. The Cytoplasmic portion of the chain corresponds to 341-362; the sequence is VNFRYLYKQRKQHLGPKKRKMK.

Belongs to the very long-chain fatty acids dehydratase HACD family.

The protein localises to the endoplasmic reticulum membrane. The enzyme catalyses a very-long-chain (3R)-3-hydroxyacyl-CoA = a very-long-chain (2E)-enoyl-CoA + H2O. The catalysed reaction is (3R)-hydroxyhexadecanoyl-CoA = (2E)-hexadecenoyl-CoA + H2O. It participates in lipid metabolism; fatty acid biosynthesis. Functionally, catalyzes the third of the four reactions of the long-chain fatty acids elongation cycle. This endoplasmic reticulum-bound enzymatic process, allows the addition of two carbons to the chain of long- and very long-chain fatty acids/VLCFAs per cycle. This enzyme catalyzes the dehydration of the 3-hydroxyacyl-CoA intermediate into trans-2,3-enoyl-CoA, within each cycle of fatty acid elongation. Thereby, it participates in the production of VLCFAs of different chain lengths that are involved in multiple biological processes as precursors of membrane lipids and lipid mediators. Involved in Rac1-signaling pathways leading to the modulation of gene expression. The polypeptide is Very-long-chain (3R)-3-hydroxyacyl-CoA dehydratase (Gallus gallus (Chicken)).